The sequence spans 201 residues: 3-isopropylmalate dehydratase small subunit (201 aa).

This sequence belongs to the LeuD family. LeuD type 1 subfamily. Heterodimer of LeuC and LeuD.

The enzyme catalyses (2R,3S)-3-isopropylmalate = (2S)-2-isopropylmalate. It functions in the pathway amino-acid biosynthesis; L-leucine biosynthesis; L-leucine from 3-methyl-2-oxobutanoate: step 2/4. In terms of biological role, catalyzes the isomerization between 2-isopropylmalate and 3-isopropylmalate, via the formation of 2-isopropylmaleate. This chain is 3-isopropylmalate dehydratase small subunit, found in Afipia carboxidovorans (strain ATCC 49405 / DSM 1227 / KCTC 32145 / OM5) (Oligotropha carboxidovorans).